The following is a 444-amino-acid chain: Serine--tRNA ligase (444 aa).

248 to 250 is a binding site for L-serine; the sequence is TSE. 279-281 is an ATP binding site; it reads RSE. E302 contributes to the L-serine binding site. 366–369 is an ATP binding site; it reads EISS. S401 lines the L-serine pocket.

The protein belongs to the class-II aminoacyl-tRNA synthetase family. Type-1 seryl-tRNA synthetase subfamily. In terms of assembly, homodimer. The tRNA molecule binds across the dimer.

It is found in the cytoplasm. It carries out the reaction tRNA(Ser) + L-serine + ATP = L-seryl-tRNA(Ser) + AMP + diphosphate + H(+). The enzyme catalyses tRNA(Sec) + L-serine + ATP = L-seryl-tRNA(Sec) + AMP + diphosphate + H(+). It participates in aminoacyl-tRNA biosynthesis; selenocysteinyl-tRNA(Sec) biosynthesis; L-seryl-tRNA(Sec) from L-serine and tRNA(Sec): step 1/1. In terms of biological role, catalyzes the attachment of serine to tRNA(Ser). Is also able to aminoacylate tRNA(Sec) with serine, to form the misacylated tRNA L-seryl-tRNA(Sec), which will be further converted into selenocysteinyl-tRNA(Sec). The protein is Serine--tRNA ligase of Polaromonas naphthalenivorans (strain CJ2).